We begin with the raw amino-acid sequence, 245 residues long: tRNA1(Val) (adenine(37)-N6)-methyltransferase (245 aa).

The protein belongs to the methyltransferase superfamily. tRNA (adenine-N(6)-)-methyltransferase family.

The protein localises to the cytoplasm. It carries out the reaction adenosine(37) in tRNA1(Val) + S-adenosyl-L-methionine = N(6)-methyladenosine(37) in tRNA1(Val) + S-adenosyl-L-homocysteine + H(+). Specifically methylates the adenine in position 37 of tRNA(1)(Val) (anticodon cmo5UAC). In Salmonella paratyphi C (strain RKS4594), this protein is tRNA1(Val) (adenine(37)-N6)-methyltransferase.